We begin with the raw amino-acid sequence, 62 residues long: Photosystem II reaction center protein Z (62 aa).

Helical transmembrane passes span 8–28 (AVFA…LVFA) and 41–61 (FSGT…NSLI).

It belongs to the PsbZ family. In terms of assembly, PSII is composed of 1 copy each of membrane proteins PsbA, PsbB, PsbC, PsbD, PsbE, PsbF, PsbH, PsbI, PsbJ, PsbK, PsbL, PsbM, PsbT, PsbY, PsbZ, Psb30/Ycf12, at least 3 peripheral proteins of the oxygen-evolving complex and a large number of cofactors. It forms dimeric complexes.

The protein resides in the plastid. It is found in the chloroplast thylakoid membrane. Its function is as follows. May control the interaction of photosystem II (PSII) cores with the light-harvesting antenna, regulates electron flow through the 2 photosystem reaction centers. PSII is a light-driven water plastoquinone oxidoreductase, using light energy to abstract electrons from H(2)O, generating a proton gradient subsequently used for ATP formation. This Oryza nivara (Indian wild rice) protein is Photosystem II reaction center protein Z.